Reading from the N-terminus, the 246-residue chain is Acetoacetate decarboxylase (246 aa).

The active-site Schiff-base intermediate with acetoacetate is Lys-116.

It belongs to the ADC family. In terms of assembly, homododecamer.

The catalysed reaction is acetoacetate + H(+) = acetone + CO2. Its function is as follows. Catalyzes the conversion of acetoacetate to acetone and carbon dioxide. In Chromobacterium violaceum (strain ATCC 12472 / DSM 30191 / JCM 1249 / CCUG 213 / NBRC 12614 / NCIMB 9131 / NCTC 9757 / MK), this protein is Acetoacetate decarboxylase.